We begin with the raw amino-acid sequence, 336 residues long: Anthranilate phosphoribosyltransferase (336 aa).

5-phospho-alpha-D-ribose 1-diphosphate-binding positions include Gly81, 84–85, Ser89, 91–94, 109–117, and Ala121; these read GD, NIST, and KHGNRGLSS. An anthranilate-binding site is contributed by Gly81. Ser93 is a Mg(2+) binding site. Position 112 (Asn112) interacts with anthranilate. Residue Arg167 participates in anthranilate binding. Residues Asp225 and Glu226 each contribute to the Mg(2+) site.

The protein belongs to the anthranilate phosphoribosyltransferase family. In terms of assembly, homodimer. Mg(2+) is required as a cofactor.

The enzyme catalyses N-(5-phospho-beta-D-ribosyl)anthranilate + diphosphate = 5-phospho-alpha-D-ribose 1-diphosphate + anthranilate. The protein operates within amino-acid biosynthesis; L-tryptophan biosynthesis; L-tryptophan from chorismate: step 2/5. Its function is as follows. Catalyzes the transfer of the phosphoribosyl group of 5-phosphorylribose-1-pyrophosphate (PRPP) to anthranilate to yield N-(5'-phosphoribosyl)-anthranilate (PRA). This is Anthranilate phosphoribosyltransferase from Mesorhizobium japonicum (strain LMG 29417 / CECT 9101 / MAFF 303099) (Mesorhizobium loti (strain MAFF 303099)).